The chain runs to 393 residues: MTRIGTPLSPTATRVLFCGSGELGKEVVIELQRLGVEVIAVDRYENAPAMQVAHRSHVINMLDGAALRAVIELEKPHFIVPEIEAIATATLVELEAEGFTVIPTARAAQLTMNREGIRRLAAEELKLPTSPYHFADTFEAYSKAVEDLGFPCVVKPVMSSSGKGQSLLKSADDVQKAWDYAQEGGRAGKGRVIIEGFIDFDYEITLLTVRHIGGTTFCAPVGHRQEKGDYQESWQPQAMSPAALAESERVAKAVTESLGGRGMFGVELFIKGDQVWFSEVSPRPHDTGLVTLISQDLSQFALHARAILGLPIPLIRQFGPSASAVILVEGQSTQTAFANLGAALAEPDTALRLFGKPEVNGQRRMGVALARDESIEAARAKATRASSAVVVEL.

Residues Glu-22–Leu-23 and Glu-82 contribute to the N(1)-(5-phospho-beta-D-ribosyl)glycinamide site. ATP-binding positions include Arg-114, Lys-155, Ser-160 to Gln-165, Glu-195 to Ile-198, and Glu-203. An ATP-grasp domain is found at Arg-119–Leu-308. Residues Glu-267 and Glu-279 each coordinate Mg(2+). Residues Asp-286, Lys-356, and Arg-363–Arg-364 each bind N(1)-(5-phospho-beta-D-ribosyl)glycinamide.

The protein belongs to the PurK/PurT family. Homodimer.

The enzyme catalyses N(1)-(5-phospho-beta-D-ribosyl)glycinamide + formate + ATP = N(2)-formyl-N(1)-(5-phospho-beta-D-ribosyl)glycinamide + ADP + phosphate + H(+). Its pathway is purine metabolism; IMP biosynthesis via de novo pathway; N(2)-formyl-N(1)-(5-phospho-D-ribosyl)glycinamide from N(1)-(5-phospho-D-ribosyl)glycinamide (formate route): step 1/1. In terms of biological role, involved in the de novo purine biosynthesis. Catalyzes the transfer of formate to 5-phospho-ribosyl-glycinamide (GAR), producing 5-phospho-ribosyl-N-formylglycinamide (FGAR). Formate is provided by PurU via hydrolysis of 10-formyl-tetrahydrofolate. This is Formate-dependent phosphoribosylglycinamide formyltransferase from Pseudomonas syringae pv. tomato (strain ATCC BAA-871 / DC3000).